We begin with the raw amino-acid sequence, 370 residues long: DNA primase large subunit PriL (370 aa).

[4Fe-4S] cluster-binding residues include Cys-230, Cys-301, Cys-310, and Cys-317. The interval 337 to 370 (EGEEAQGKEQGKEKDDGKEKENGKESEVKKKKEK) is disordered.

It belongs to the eukaryotic-type primase large subunit family. In terms of assembly, heterodimer of a small subunit (PriS) and a large subunit (PriL). The cofactor is [4Fe-4S] cluster.

Functionally, regulatory subunit of DNA primase, an RNA polymerase that catalyzes the synthesis of short RNA molecules used as primers for DNA polymerase during DNA replication. Stabilizes and modulates the activity of the small subunit, increasing the rate of DNA synthesis, and conferring RNA synthesis capability. The DNA polymerase activity may enable DNA primase to also catalyze primer extension after primer synthesis. May also play a role in DNA repair. The protein is DNA primase large subunit PriL of Methanosarcina mazei (strain ATCC BAA-159 / DSM 3647 / Goe1 / Go1 / JCM 11833 / OCM 88) (Methanosarcina frisia).